The sequence spans 384 residues: Small ribosomal subunit protein mS31 (384 aa).

The N-terminal 54 residues, 1 to 54 (MLHRIPAFLRPRPFSGLPLSCGNRDVSVAVLPAAQSGAVRTENNIQRHFCTSRS), are a transit peptide targeting the mitochondrion. Positions 101–136 (TANVKTPKPRGRKPSASLEATVDRLQKAPEDPPKKR) are disordered. Over residues 121 to 136 (TVDRLQKAPEDPPKKR) the composition is skewed to basic and acidic residues.

The protein belongs to the mitochondrion-specific ribosomal protein mS31 family. As to quaternary structure, component of the mitochondrial ribosome small subunit (28S) which comprises a 12S rRNA and about 30 distinct proteins.

The protein localises to the mitochondrion. This is Small ribosomal subunit protein mS31 (Mrps31) from Mus musculus (Mouse).